The chain runs to 261 residues: Undecaprenyl-diphosphatase (261 aa).

The next 8 helical transmembrane spans lie at 16-36, 40-60, 82-102, 107-127, 140-160, 183-203, 211-231, and 239-259; these read TEFL…LFGF, GLVF…VYFW, FWFL…LEDI, LRAP…LYLA, IRFG…IPGV, FSFL…MLKM, SFVL…WFLI, and FNIF…IALL.

The protein belongs to the UppP family.

Its subcellular location is the cell membrane. The catalysed reaction is di-trans,octa-cis-undecaprenyl diphosphate + H2O = di-trans,octa-cis-undecaprenyl phosphate + phosphate + H(+). Catalyzes the dephosphorylation of undecaprenyl diphosphate (UPP). Confers resistance to bacitracin. The polypeptide is Undecaprenyl-diphosphatase (Desulforudis audaxviator (strain MP104C)).